A 188-amino-acid chain; its full sequence is Peroxynitrite isomerase (188 aa).

A GXWXGXG motif is present at residues 35–41 (GTWRGEG). Histidine 178 serves as a coordination point for heme b.

Belongs to the nitrobindin family. Homodimer. The cofactor is heme b.

The enzyme catalyses peroxynitrite = nitrate. It functions in the pathway nitrogen metabolism. Functionally, heme-binding protein able to scavenge peroxynitrite and to protect free L-tyrosine against peroxynitrite-mediated nitration, by acting as a peroxynitrite isomerase that converts peroxynitrite to nitrate. Therefore, this protein likely plays a role in peroxynitrite sensing and in the detoxification of reactive nitrogen and oxygen species (RNS and ROS, respectively). Is able to bind nitric oxide (NO) in vitro, but may act as a sensor of peroxynitrite levels in vivo. In Frankia casuarinae (strain DSM 45818 / CECT 9043 / HFP020203 / CcI3), this protein is Peroxynitrite isomerase.